A 692-amino-acid chain; its full sequence is Centrosomal protein of 83 kDa (692 aa).

2 coiled-coil regions span residues 32 to 625 (RCEH…SLIL) and 656 to 689 (HLQE…ELGS). The residue at position 689 (S689) is a Phosphoserine.

Belongs to the CEP83 family. Interacts with CEP164 and IFT20.

Its subcellular location is the cytoplasm. The protein localises to the cytoskeleton. It is found in the microtubule organizing center. The protein resides in the centrosome. It localises to the centriole. In terms of biological role, component of the distal appendage region of the centriole involved in the initiation of primary cilium assembly. May collaborate with IFT20 in the trafficking of ciliary membrane proteins from the Golgi complex to the cilium during the initiation of primary cilium assembly. The protein is Centrosomal protein of 83 kDa (Cep83) of Mus musculus (Mouse).